The chain runs to 131 residues: Small ribosomal subunit protein uS11 (131 aa).

This sequence belongs to the universal ribosomal protein uS11 family. Part of the 30S ribosomal subunit. Interacts with proteins S7 and S18. Binds to IF-3.

In terms of biological role, located on the platform of the 30S subunit, it bridges several disparate RNA helices of the 16S rRNA. Forms part of the Shine-Dalgarno cleft in the 70S ribosome. In Bacillus licheniformis (strain ATCC 14580 / DSM 13 / JCM 2505 / CCUG 7422 / NBRC 12200 / NCIMB 9375 / NCTC 10341 / NRRL NRS-1264 / Gibson 46), this protein is Small ribosomal subunit protein uS11.